Reading from the N-terminus, the 327-residue chain is Mitochondrial substrate carrier family protein A (327 aa).

The tract at residues 1 to 36 (MVINNQNNNNQNNNQNNNNKNDNLNNSTTTTTTTAT) is disordered. The Mitochondrial intermembrane portion of the chain corresponds to 1–48 (MVINNQNNNNQNNNQNNNNKNDNLNNSTTTTTTTATTTKSSTLFHSND). Solcar repeat units follow at residues 43 to 132 (LFHS…FKRM), 140 to 224 (ISVI…IKEK), and 233 to 323 (PPLY…AITL). The helical transmembrane segment at 49–66 (FFSGLIAGIVSRTLTAPL) threads the bilayer. The Mitochondrial matrix portion of the chain corresponds to 67 to 106 (ERIKILNQVEVILKDGTKYNRIIPAFKVIIKEEGIAGLFR). A helical transmembrane segment spans residues 107–127 (GNFVNIIKAGPQSAIRFYSYG). Residues 128-145 (AFKRMASEPDGSISVINR) lie on the Mitochondrial intermembrane side of the membrane. Residues 146 to 166 (MWAGASSGVVSVALTHPLDVI) form a helical membrane-spanning segment. Over 167–192 (KTHITVIAPTAATIKNVTKGIYRDLG) the chain is Mitochondrial matrix. The helical transmembrane segment at 193-213 (IIGFFRGLSAGILNIAPFAAL) threads the bilayer. Topologically, residues 214 to 238 (NFTFYETIKEKTQQYILKSPPLYAP) are mitochondrial intermembrane. Residues 239–259 (SIYGAISGGLTMTILYPLDVV) traverse the membrane as a helical segment. The Mitochondrial matrix portion of the chain corresponds to 260–303 (KRRIMLQHFDRNQLPIYKNFIDAIIKITKTEGISALYKGIRPAY). The helical transmembrane segment at 304–324 (LKVIPTVSINFLIYEGAITLF) threads the bilayer. Topologically, residues 325-327 (EKK) are mitochondrial intermembrane.

This sequence belongs to the mitochondrial carrier (TC 2.A.29) family.

The protein resides in the mitochondrion inner membrane. Functionally, calcium-dependent mitochondrial solute carrier. Mitochondrial solute carriers shuttle metabolites, nucleotides, and cofactors through the mitochondrial inner membrane. In Dictyostelium discoideum (Social amoeba), this protein is Mitochondrial substrate carrier family protein A (mcfA).